The sequence spans 400 residues: 2-octaprenylphenol hydroxylase (400 aa).

FAD contacts are provided by residues 49–52 (RVSA) and 297–303 (LAGQGVN).

This sequence belongs to the UbiH/COQ6 family. As to quaternary structure, homotetramer. Component of the Ubi complex metabolon, which regroups five ubiquinone biosynthesis proteins (UbiE, UbiF, UbiG, UbiH and UbiI) and two accessory factors (UbiK and the lipid-binding protein UbiJ). It depends on FAD as a cofactor.

The protein resides in the cytoplasm. The catalysed reaction is 2-all-trans-octaprenylphenol + NADPH + O2 + H(+) = 3-(all-trans-octaprenyl)benzene-1,2-diol + NADP(+) + H2O. It catalyses the reaction a 2-(all-trans-polyprenyl)phenol + NADPH + O2 + H(+) = a 3-(all-trans-polyprenyl)benzene-1,2-diol + NADP(+) + H2O. Its pathway is cofactor biosynthesis; ubiquinone biosynthesis. Its function is as follows. FAD-dependent monooxygenase required for the aerobic hydroxylation of 2-octaprenylphenol to 2-octaprenyl-6-hydroxy-phenol, the first hydroxylation step in coenzyme Q (ubiquinone) biosynthesis. This is 2-octaprenylphenol hydroxylase from Escherichia coli (strain K12).